A 461-amino-acid polypeptide reads, in one-letter code: tRNA-splicing endonuclease subunit Sen2 (461 aa).

Disordered regions lie at residues 140 to 176 and 190 to 210; these read GAEQTGDSCDTVCPNTENTELSGQSSTDTGNIATSSP and GDPASDSMVGSKEQEPADVKE. A compositionally biased stretch (polar residues) spans 144–176; that stretch reads TGDSCDTVCPNTENTELSGQSSTDTGNIATSSP. Over residues 201–210 the composition is skewed to basic and acidic residues; it reads KEQEPADVKE. Active-site residues include Tyr-365, His-373, and Lys-412.

The protein belongs to the tRNA-intron endonuclease family. As to quaternary structure, tRNA splicing endonuclease is a heterotetramer composed of SEN2, SEN15, SEN34/LENG5 and SEN54.

Its subcellular location is the nucleus. It catalyses the reaction pretRNA = a 3'-half-tRNA molecule with a 5'-OH end + a 5'-half-tRNA molecule with a 2',3'-cyclic phosphate end + an intron with a 2',3'-cyclic phosphate and a 5'-hydroxyl terminus.. Functionally, constitutes one of the two catalytic subunit of the tRNA-splicing endonuclease complex, a complex responsible for identification and cleavage of the splice sites in pre-tRNA. It cleaves pre-tRNA at the 5'- and 3'-splice sites to release the intron. The products are an intron and two tRNA half-molecules bearing 2',3'-cyclic phosphate and 5'-OH termini. There are no conserved sequences at the splice sites, but the intron is invariably located at the same site in the gene, placing the splice sites an invariant distance from the constant structural features of the tRNA body. Probably carries the active site for 5'-splice site cleavage. The tRNA splicing endonuclease is also involved in mRNA processing via its association with pre-mRNA 3'-end processing factors, establishing a link between pre-tRNA splicing and pre-mRNA 3'-end formation, suggesting that the endonuclease subunits function in multiple RNA-processing events. This chain is tRNA-splicing endonuclease subunit Sen2 (TSEN2), found in Gallus gallus (Chicken).